Consider the following 279-residue polypeptide: Energy-coupling factor transporter ATP-binding protein EcfA1 (279 aa).

The ABC transporter domain occupies 5–240 (IELKKVTFNY…GDELLQLGLD (236 aa)). Residue 40–47 (GHNGSGKS) coordinates ATP.

It belongs to the ABC transporter superfamily. Energy-coupling factor EcfA family. Forms a stable energy-coupling factor (ECF) transporter complex composed of 2 membrane-embedded substrate-binding proteins (S component), 2 ATP-binding proteins (A component) and 2 transmembrane proteins (T component).

The protein localises to the cell membrane. Functionally, ATP-binding (A) component of a common energy-coupling factor (ECF) ABC-transporter complex. Unlike classic ABC transporters this ECF transporter provides the energy necessary to transport a number of different substrates. This Streptococcus pyogenes serotype M12 (strain MGAS2096) protein is Energy-coupling factor transporter ATP-binding protein EcfA1.